Here is a 1484-residue protein sequence, read N- to C-terminus: Ral GTPase-activating protein subunit beta (1484 aa).

Disordered stretches follow at residues P355–R437 and G697–E728. At S359 the chain carries Phosphoserine. Phosphothreonine occurs at positions 363 and 379. 3 stretches are compositionally biased toward polar residues: residues S369–P381, N392–E428, and N701–P725. Phosphoserine occurs at positions 421 and 710. T724 is subject to Phosphothreonine. The 245-residue stretch at I1138 to I1382 folds into the Rap-GAP domain. Phosphoserine is present on S1275. The segment at D1301–P1325 is disordered. Over residues S1302–S1313 the composition is skewed to low complexity.

As to quaternary structure, component of the heterodimeric RalGAP1 complex with RALGAPA1 and of the heterodimeric RalGAP2 complex with RALGAPA2. Heterodimerization is required for activity. Detected in brain, thymus, lung, heart, spleen, liver and testis (at protein level).

Functionally, non-catalytic subunit of the heterodimeric RalGAP1 and RalGAP2 complexes which act as GTPase activators for the Ras-like small GTPases RALA and RALB. The polypeptide is Ral GTPase-activating protein subunit beta (Rattus norvegicus (Rat)).